The sequence spans 145 residues: Fatty acid-binding protein homolog 4 (145 aa).

It belongs to the calycin superfamily. Fatty-acid binding protein (FABP) family.

In Caenorhabditis elegans, this protein is Fatty acid-binding protein homolog 4 (lbp-4).